Here is a 257-residue protein sequence, read N- to C-terminus: Transcription factor LBX2 (257 aa).

The disordered stretch occupies residues 1–43 (MTSSSKDMKAGSVLQSSGEERRRGPLDQLPPPANSNKPLTPFS). Positions 1 to 46 (MTSSSKDMKAGSVLQSSGEERRRGPLDQLPPPANSNKPLTPFSIED) are required for convergent extension movement and hypaxial myogenesis during gastrulation. Required for the formation of thick and thin myofilaments. Required for myod1 expression in the pectoral fin bud. Required for continuous expression of cxcl12a in the posterior lateral mesoderm at the tail bud stage and in adaxial cells at the 10-somite stage. The segment at residues 126–185 (RRKSRTAFTNHQIYELEKRFLYQKYLSPADRDQIAQQLGLTNAQVITWFQNRRAKLKRDL) is a DNA-binding region (homeobox). Positions 206–257 (LVSMEDMEDAHGGSGPISPSLSPRAFPQSPSSSRGQTTDEFSEEDEEIEVDD) are disordered. Positions 233-243 (QSPSSSRGQTT) are enriched in polar residues. The segment covering 245–257 (EFSEEDEEIEVDD) has biased composition (acidic residues).

As to quaternary structure, interacts (via N-terminus) with tle3a/gro2 (via C-terminus).

It is found in the nucleus. In terms of biological role, transcription factor required in several developmental processes. Involved in axis formation during embryonic development by inhibiting tle3a/gro2 from binding to tcf7l1a, thereby facilitating ctnnb1-mediated transcription of canonical Wnt/CTNNB1 signaling target genes. Regulates convergent extension movements and hypaxial myogenesis during gastrulation by activating non-canonical Wnt signaling via wnt5b. Required for the formation of myofibrils and fusion of fast muscle precursor cells, potentially via transcriptional regulation of genes specific to thick and thin myofilaments. Regulates the migration of the posterior lateral line primordium during embryonic development, possibly via regulation of cxcl12a/sdf1a expression in the posterior lateral mesoderm, thereby modulating the deposition of neuromasts at correct intervals. The protein is Transcription factor LBX2 of Danio rerio (Zebrafish).